The chain runs to 333 residues: Low specificity L-threonine aldolase (333 aa).

Lysine 197 carries the N6-(pyridoxal phosphate)lysine modification.

The protein belongs to the threonine aldolase family. As to quaternary structure, homotetramer. The cofactor is pyridoxal 5'-phosphate.

The catalysed reaction is L-threonine = acetaldehyde + glycine. It carries out the reaction L-allo-threonine = acetaldehyde + glycine. Catalyzes the cleavage of L-allo-threonine and L-threonine to glycine and acetaldehyde. L-threo-phenylserine and L-erythro-phenylserine are also good substrates. In Escherichia coli (strain K12), this protein is Low specificity L-threonine aldolase (ltaE).